The primary structure comprises 447 residues: MKRLILETLKAEVVPAIGCTEPIAVALACAKAREIAGVSIDEVDHVDVIVSPNVYKNGLAVGVPHTEHIGLAIAAALGLTGGKCHQGLQVLEGMKKTEQDIAVSLMDQGLISLDIKDTNEKVYIEVILSIQGWKAKVIIKERHNQFVYLEKQGHVLLDSKTVPGVIASHQNPLYHMEIKEIIAIIEQIPHEELAFMMDGVEMNKKMAMTGLQPGVGMGVGYTYYDNMKKGILSDDIMNQAMMLTAAASDARMSGSILPVMSSNGSGNNGITAILPIVAYGMKFQVEDEKMAKALAISHLMNSYIKHYIGRLSALCGCGVAAGTGASVAIAWLMGAKEQQIDGVIKNMLANVSGMICDGAKVGCALKLATSAQVAIQSALLAMDHHIVPTGNGIVAETAEGTIENLRILSEEGMQLTDHAILSVMMKFQRARESHIKDDVLTHEKYVV.

This sequence belongs to the UPF0597 family.

The protein is UPF0597 protein Amet_4665 of Alkaliphilus metalliredigens (strain QYMF).